The primary structure comprises 92 residues: Small ribosomal subunit protein uS19 (92 aa).

Belongs to the universal ribosomal protein uS19 family.

Functionally, protein S19 forms a complex with S13 that binds strongly to the 16S ribosomal RNA. The protein is Small ribosomal subunit protein uS19 of Listeria innocua serovar 6a (strain ATCC BAA-680 / CLIP 11262).